A 1192-amino-acid chain; its full sequence is ATP-dependent helicase/deoxyribonuclease subunit B (1192 aa).

The protein belongs to the helicase family. AddB/RexB type 2 subfamily. In terms of assembly, heterodimer of AddA and RexB. It depends on Mg(2+) as a cofactor.

Functionally, the heterodimer acts as both an ATP-dependent DNA helicase and an ATP-dependent, dual-direction single-stranded exonuclease. Recognizes the chi site generating a DNA molecule suitable for the initiation of homologous recombination. This subunit has 5' -&gt; 3' nuclease activity but not helicase activity. This chain is ATP-dependent helicase/deoxyribonuclease subunit B, found in Pediococcus pentosaceus (strain ATCC 25745 / CCUG 21536 / LMG 10740 / 183-1w).